We begin with the raw amino-acid sequence, 509 residues long: Putative ATP-dependent RNA helicase QP509L (509 aa).

The 153-residue stretch at 110 to 262 (KKLLPPYGRF…KIIIHHLGQP (153 aa)) folds into the Helicase ATP-binding domain. 123-130 (LNTGLGKT) is a binding site for ATP. Residues 215–218 (DEAH) carry the DEAH box motif.

Belongs to the DEAD box helicase family. DEAH subfamily.

The catalysed reaction is ATP + H2O = ADP + phosphate + H(+). This African swine fever virus (isolate Tick/Malawi/Lil 20-1/1983) (ASFV) protein is Putative ATP-dependent RNA helicase QP509L.